Here is a 682-residue protein sequence, read N- to C-terminus: MTAVSLSDGTGVLKTDPWLEPFSGALRERYAAYQKQRTIIEEHEGGLAEFSKGYKSMGFQVDKNGGVRYREWAPNATEARLIGEFNNWSHTANPMTKSPFGVWECYVPPVSPGVCPIPHDSMVKISMTIPGGESIDRIPTWITRVTQDLNISPVYDGRFWNPPKDQQYRFKHGHSTRPVEGLKIYEAHVGISSPNMRVTTYKEFEVDVLPKIKQLGYNCIQMMAIMEHAYYASFGYQVTNFFAASSRFGTPEELKSLVDKAHELGLTVLLDVVHSHASKNILDGINMYDGSDHLYFHEGGRGRHDQWDSRLFNYGHHEVLRFLLSNLRFWMDIYMFDGFRFDGVTSMMYKHHGIGSGFSGGYHEYFGDSVDLEAMVYLMLANAMLHENYPHVVTIAEDVSGMPTLCRPVAEGGVGFDYRLSMAIPDMWIKLLKEYTDDQWEMGHIVHNLTNRRHLEKSVAYAESHDQALVGDKTLAFWLMDKEMYDFMSDLSPLTPIIDRGLALHKMIRFIVHTLGGEAYLNFEGNEFGHPEWMDFPREGNGNSFAHARRQFNLVDDKLLRYKYLYEFDVAMNWLEDKYKWLNSPQAYVSLKHEGDKVIVFERAGLLFIFNFHPTQSFTDYRVGVDTAGEYKVILTSDETRFGGHNRIDMGGRYFTTPMEWNGRKNWLQVYSPSRTVLVLGL.

Trp88 and Lys124 together coordinate (1,4-alpha-D-glucosyl)n. Asp342 serves as the catalytic Nucleophile. Residue Glu397 is the Proton donor of the active site.

Belongs to the glycosyl hydrolase 13 family. GlgB subfamily.

It localises to the cytoplasm. The enzyme catalyses Transfers a segment of a (1-&gt;4)-alpha-D-glucan chain to a primary hydroxy group in a similar glucan chain.. The protein operates within glycan biosynthesis; glycogen biosynthesis. In terms of biological role, glycogen-branching enzyme participates in the glycogen biosynthetic process along with glycogenin and glycogen synthase. Generates alpha-1,6-glucosidic branches from alpha-1,4-linked glucose chains, to increase solubility of the glycogen polymer. This Cryptococcus neoformans var. grubii serotype A (strain H99 / ATCC 208821 / CBS 10515 / FGSC 9487) (Filobasidiella neoformans var. grubii) protein is 1,4-alpha-glucan-branching enzyme.